The primary structure comprises 401 residues: Thermophilic serine proteinase (401 aa).

An N-terminal signal peptide occupies residues 1-24 (MKFKAIVSLSLAVSMSLFPFLVEA). A propeptide spanning residues 25–121 (ASNDGVESPK…AEPNYLFNAA (97 aa)) is cleaved from the precursor. Asp126 contacts Ca(2+). A Peptidase S8 domain is found at 133-399 (QYGPQNTYTD…YGRINSYNAV (267 aa)). Asp160 serves as the catalytic Charge relay system. Ca(2+) is bound by residues Pro168, Asp169, Asp171, Asp179, Asp184, and Asp186. His193 functions as the Charge relay system in the catalytic mechanism. Ca(2+) is bound by residues Glu204, Asn207, Thr209, and Ile211. Cysteines 258 and 260 form a disulfide. 3 residues coordinate Na(+): Tyr297, Val300, and Asp323. Ser347 acts as the Charge relay system in catalysis.

This sequence belongs to the peptidase S8 family. Ca(2+) serves as cofactor. Na(+) is required as a cofactor.

It is found in the secreted. This chain is Thermophilic serine proteinase, found in Bacillus sp. (strain AK1).